The following is a 612-amino-acid chain: Dihydroxy-acid dehydratase (612 aa).

Position 81 (D81) interacts with Mg(2+). [2Fe-2S] cluster is bound at residue C122. D123 and K124 together coordinate Mg(2+). K124 bears the N6-carboxylysine mark. C193 serves as a coordination point for [2Fe-2S] cluster. E489 serves as a coordination point for Mg(2+). The Proton acceptor role is filled by S515.

The protein belongs to the IlvD/Edd family. Homodimer. It depends on [2Fe-2S] cluster as a cofactor. Mg(2+) is required as a cofactor.

It carries out the reaction (2R)-2,3-dihydroxy-3-methylbutanoate = 3-methyl-2-oxobutanoate + H2O. The enzyme catalyses (2R,3R)-2,3-dihydroxy-3-methylpentanoate = (S)-3-methyl-2-oxopentanoate + H2O. It functions in the pathway amino-acid biosynthesis; L-isoleucine biosynthesis; L-isoleucine from 2-oxobutanoate: step 3/4. Its pathway is amino-acid biosynthesis; L-valine biosynthesis; L-valine from pyruvate: step 3/4. Its function is as follows. Functions in the biosynthesis of branched-chain amino acids. Catalyzes the dehydration of (2R,3R)-2,3-dihydroxy-3-methylpentanoate (2,3-dihydroxy-3-methylvalerate) into 2-oxo-3-methylpentanoate (2-oxo-3-methylvalerate) and of (2R)-2,3-dihydroxy-3-methylbutanoate (2,3-dihydroxyisovalerate) into 2-oxo-3-methylbutanoate (2-oxoisovalerate), the penultimate precursor to L-isoleucine and L-valine, respectively. This chain is Dihydroxy-acid dehydratase, found in Xanthomonas axonopodis pv. citri (strain 306).